The sequence spans 127 residues: Mediator of RNA polymerase II transcription subunit 9 (127 aa).

A coiled-coil region spans residues 95–119; sequence QKEQEIEAKKRVHRQLRQRVEEIAG.

This sequence belongs to the Mediator complex subunit 9 family. In terms of assembly, component of the Mediator complex.

It is found in the nucleus. Component of the Mediator complex, a coactivator involved in the regulated transcription of nearly all RNA polymerase II-dependent genes. Mediator functions as a bridge to convey information from gene-specific regulatory proteins to the basal RNA polymerase II transcription machinery. Mediator is recruited to promoters by direct interactions with regulatory proteins and serves as a scaffold for the assembly of a functional preinitiation complex with RNA polymerase II and the general transcription factors. This Eremothecium gossypii (strain ATCC 10895 / CBS 109.51 / FGSC 9923 / NRRL Y-1056) (Yeast) protein is Mediator of RNA polymerase II transcription subunit 9 (CSE2).